A 312-amino-acid chain; its full sequence is L-lactate dehydrogenase (312 aa).

NAD(+) contacts are provided by Val-14, Asp-35, and Tyr-66. Substrate is bound by residues Gln-83, Arg-90, and 122-125 (NPVD). NAD(+) is bound by residues 120 to 122 (ASN) and Ser-145. 150-153 (DSAR) contacts substrate. His-177 acts as the Proton acceptor in catalysis. Phosphotyrosine is present on Tyr-220. Residue Thr-229 coordinates substrate.

This sequence belongs to the LDH/MDH superfamily. LDH family. In terms of assembly, homotetramer.

Its subcellular location is the cytoplasm. It carries out the reaction (S)-lactate + NAD(+) = pyruvate + NADH + H(+). It participates in fermentation; pyruvate fermentation to lactate; (S)-lactate from pyruvate: step 1/1. In terms of biological role, catalyzes the conversion of lactate to pyruvate. This is L-lactate dehydrogenase from Mycoplasma pneumoniae (strain ATCC 29342 / M129 / Subtype 1) (Mycoplasmoides pneumoniae).